We begin with the raw amino-acid sequence, 487 residues long: GPI mannosyltransferase 1 (487 aa).

Transmembrane regions (helical) follow at residues 26–46 (PLPL…YGLW), 87–107 (ILAW…GPWA), and 121–141 (VLFA…LVMG). A disordered region spans residues 147 to 175 (SAAKGKEKDTEKTKEGGKKGPSVTASTGM). Basic and acidic residues predominate over residues 150–164 (KGKEKDTEKTKEGGK). The next 7 membrane-spanning stretches (helical) occupy residues 205 to 225 (LLGV…ITLA), 227 to 247 (LLLG…PAIV), 289 to 309 (LLLA…MYRL), 359 to 379 (IESL…PLTL), 393 to 413 (FAFV…YLVL), 429 to 449 (MGLV…QQAY), and 462 to 482 (GLWM…GVIV).

This sequence belongs to the PIGM family.

It localises to the endoplasmic reticulum membrane. The protein operates within glycolipid biosynthesis; glycosylphosphatidylinositol-anchor biosynthesis. Its function is as follows. Mannosyltransferase involved in glycosylphosphatidylinositol-anchor biosynthesis. Transfers the first alpha-1,4-mannose to GlcN-acyl-PI during GPI precursor assembly. Required for cell wall integrity. In Neurospora crassa (strain ATCC 24698 / 74-OR23-1A / CBS 708.71 / DSM 1257 / FGSC 987), this protein is GPI mannosyltransferase 1 (gim-1).